The sequence spans 168 residues: uncharacterized protein (168 aa).

Transmembrane regions (helical) follow at residues 4–24 (IIAL…PEEE) and 94–114 (IMVG…GFAW).

This sequence to A.aeolicus aq_1446.

Its subcellular location is the cell membrane. This is an uncharacterized protein from Aquifex aeolicus (strain VF5).